A 957-amino-acid chain; its full sequence is Glycine dehydrogenase (decarboxylating) (957 aa).

An N6-(pyridoxal phosphate)lysine modification is found at K708.

It belongs to the GcvP family. As to quaternary structure, the glycine cleavage system is composed of four proteins: P, T, L and H. Pyridoxal 5'-phosphate serves as cofactor.

It carries out the reaction N(6)-[(R)-lipoyl]-L-lysyl-[glycine-cleavage complex H protein] + glycine + H(+) = N(6)-[(R)-S(8)-aminomethyldihydrolipoyl]-L-lysyl-[glycine-cleavage complex H protein] + CO2. The glycine cleavage system catalyzes the degradation of glycine. The P protein binds the alpha-amino group of glycine through its pyridoxal phosphate cofactor; CO(2) is released and the remaining methylamine moiety is then transferred to the lipoamide cofactor of the H protein. The protein is Glycine dehydrogenase (decarboxylating) of Shigella boydii serotype 18 (strain CDC 3083-94 / BS512).